The sequence spans 273 residues: Ribosomal RNA small subunit methyltransferase A (273 aa).

6 residues coordinate S-adenosyl-L-methionine: N18, L20, G45, E66, D91, and N113.

The protein belongs to the class I-like SAM-binding methyltransferase superfamily. rRNA adenine N(6)-methyltransferase family. RsmA subfamily.

It localises to the cytoplasm. The catalysed reaction is adenosine(1518)/adenosine(1519) in 16S rRNA + 4 S-adenosyl-L-methionine = N(6)-dimethyladenosine(1518)/N(6)-dimethyladenosine(1519) in 16S rRNA + 4 S-adenosyl-L-homocysteine + 4 H(+). Its function is as follows. Specifically dimethylates two adjacent adenosines (A1518 and A1519) in the loop of a conserved hairpin near the 3'-end of 16S rRNA in the 30S particle. May play a critical role in biogenesis of 30S subunits. The polypeptide is Ribosomal RNA small subunit methyltransferase A (Shigella dysenteriae serotype 1 (strain Sd197)).